A 397-amino-acid chain; its full sequence is Cytochrome b (397 aa).

The next 4 helical transmembrane spans lie at 38-58 (FGSLAGICLVIQIVTGVFLAM), 82-104 (WLLRYMHANGASMFFIVVYLHIF), 119-139 (VWCLGVVIFLLMIVTAFIGYV), and 185-205 (FFSLHYLLPFILVGASLLHLA). Heme b-binding residues include histidine 88 and histidine 102. 2 residues coordinate heme b: histidine 189 and histidine 203. Histidine 208 lines the a ubiquinone pocket. 4 consecutive transmembrane segments (helical) span residues 231–251 (FYVKDLVGWVAFAIFFSIWIF), 295–315 (AGGVAAIALVFISLLALPFFK), 327–347 (IYQGIFWLLLADCLLLGWIGC), and 354–373 (FVTIGQISSFFFFLFFAITP).

Belongs to the cytochrome b family. The main subunits of complex b-c1 are: cytochrome b, cytochrome c1 and the Rieske protein. Requires heme b as cofactor.

It is found in the mitochondrion inner membrane. Functionally, component of the ubiquinol-cytochrome c reductase complex (complex III or cytochrome b-c1 complex) that is part of the mitochondrial respiratory chain. The b-c1 complex mediates electron transfer from ubiquinol to cytochrome c. Contributes to the generation of a proton gradient across the mitochondrial membrane that is then used for ATP synthesis. The polypeptide is Cytochrome b (MT-CYB) (Oryza sativa subsp. japonica (Rice)).